A 212-amino-acid chain; its full sequence is Pyrrolidone-carboxylate peptidase (212 aa).

Residues Glu78, Cys141, and His165 contribute to the active site.

This sequence belongs to the peptidase C15 family. In terms of assembly, homotetramer.

The protein localises to the cytoplasm. The catalysed reaction is Release of an N-terminal pyroglutamyl group from a polypeptide, the second amino acid generally not being Pro.. Its function is as follows. Removes 5-oxoproline from various penultimate amino acid residues except L-proline. This is Pyrrolidone-carboxylate peptidase from Staphylococcus aureus (strain NCTC 8325 / PS 47).